A 935-amino-acid chain; its full sequence is Kinesin heavy chain (935 aa).

The region spanning Asn-5 to Ile-329 is the Kinesin motor domain. ATP is bound by residues Gly-87–Thr-94 and Gly-237–Thr-244. The stretch at Ala-342–Ala-887 forms a coiled coil. 2 disordered regions span residues Ala-400 to Pro-419 and Arg-898 to Arg-935.

The protein belongs to the TRAFAC class myosin-kinesin ATPase superfamily. Kinesin family. Kinesin subfamily.

The protein resides in the cytoplasm. Its subcellular location is the cytoskeleton. Its function is as follows. Kinesin is a microtubule-associated force-producing protein that may play a role in organelle transport. Its motor activity is directed toward the microtubule's plus end. The speed of this motor is 4-5 times faster than its animal counterparts. The polypeptide is Kinesin heavy chain (Syncephalastrum racemosum (Filamentous fungus)).